Reading from the N-terminus, the 403-residue chain is Argininosuccinate synthase (403 aa).

Residues 10–18 (AYSGGLDTS) and Ala37 contribute to the ATP site. An L-citrulline-binding site is contributed by Tyr89. Residue Gly119 participates in ATP binding. L-aspartate is bound by residues Thr121, Asn125, and Asp126. Asn125 provides a ligand contact to L-citrulline. The L-citrulline site is built by Arg129, Ser178, Ser187, Glu263, and Tyr275.

The protein belongs to the argininosuccinate synthase family. Type 1 subfamily. In terms of assembly, homotetramer.

The protein resides in the cytoplasm. It catalyses the reaction L-citrulline + L-aspartate + ATP = 2-(N(omega)-L-arginino)succinate + AMP + diphosphate + H(+). It participates in amino-acid biosynthesis; L-arginine biosynthesis; L-arginine from L-ornithine and carbamoyl phosphate: step 2/3. The sequence is that of Argininosuccinate synthase from Idiomarina loihiensis (strain ATCC BAA-735 / DSM 15497 / L2-TR).